Consider the following 291-residue polypeptide: KVLVFFVATILVAWQCHAYDMFPLRMNTGYGARTPEVKCASWRLAVEAHNIFGFETIPEECVEATKEYIHGEQYRSDSKTVNQQAYFYARDLEVHPKDTFVFSIDGTVLSNIPYYKKHGYGVEKFNSTLYDEWVNKGNAPALPETLKNYNKLVSLGFKIIFLSGRTLDKQAVTEANLKKAGYHTWEKLILKDPQDPSTPNAVSYKTAAREKLIRQGYNIVGIIGDQWSDLLGGHRGESRTFKLPNPCTTFSSSFTSQQSSLLPIYLYVIRCVQIGALASLYVVSAVCQQVM.

Asparagine 126 carries N-linked (GlcNAc...) asparagine glycosylation.

In terms of tissue distribution, accumulates in the stems of developing soybean seedlings.

Its function is as follows. May function as somatic storage protein during early seedling development. This is Stem 31 kDa glycoprotein (VSP25) from Glycine max (Soybean).